The sequence spans 328 residues: Biotin synthase (328 aa).

In terms of domain architecture, Radical SAM core spans 50-277 (FGDQVHLCCI…GKEIVICGGR (228 aa)). [4Fe-4S] cluster-binding residues include Cys67, Cys71, and Cys74. Positions 111, 142, and 202 each coordinate [2Fe-2S] cluster.

The protein belongs to the radical SAM superfamily. Biotin synthase family. Homodimer. The cofactor is [4Fe-4S] cluster. [2Fe-2S] cluster serves as cofactor.

The catalysed reaction is (4R,5S)-dethiobiotin + (sulfur carrier)-SH + 2 reduced [2Fe-2S]-[ferredoxin] + 2 S-adenosyl-L-methionine = (sulfur carrier)-H + biotin + 2 5'-deoxyadenosine + 2 L-methionine + 2 oxidized [2Fe-2S]-[ferredoxin]. It participates in cofactor biosynthesis; biotin biosynthesis; biotin from 7,8-diaminononanoate: step 2/2. In terms of biological role, catalyzes the conversion of dethiobiotin (DTB) to biotin by the insertion of a sulfur atom into dethiobiotin via a radical-based mechanism. The chain is Biotin synthase from Desulfatibacillum aliphaticivorans.